Consider the following 267-residue polypeptide: 4-hydroxy-tetrahydrodipicolinate reductase (267 aa).

NAD(+) contacts are provided by residues 8–13 and aspartate 34; that span reads GAAGRM. NADP(+) is bound at residue arginine 35. NAD(+) contacts are provided by residues 98-100 and 122-125; these read GTT and AANF. The active-site Proton donor/acceptor is the histidine 155. Histidine 156 provides a ligand contact to (S)-2,3,4,5-tetrahydrodipicolinate. The active-site Proton donor is lysine 159. 165–166 provides a ligand contact to (S)-2,3,4,5-tetrahydrodipicolinate; the sequence is GT.

This sequence belongs to the DapB family.

It localises to the cytoplasm. It carries out the reaction (S)-2,3,4,5-tetrahydrodipicolinate + NAD(+) + H2O = (2S,4S)-4-hydroxy-2,3,4,5-tetrahydrodipicolinate + NADH + H(+). The catalysed reaction is (S)-2,3,4,5-tetrahydrodipicolinate + NADP(+) + H2O = (2S,4S)-4-hydroxy-2,3,4,5-tetrahydrodipicolinate + NADPH + H(+). The protein operates within amino-acid biosynthesis; L-lysine biosynthesis via DAP pathway; (S)-tetrahydrodipicolinate from L-aspartate: step 4/4. Its function is as follows. Catalyzes the conversion of 4-hydroxy-tetrahydrodipicolinate (HTPA) to tetrahydrodipicolinate. In Pseudomonas savastanoi pv. phaseolicola (strain 1448A / Race 6) (Pseudomonas syringae pv. phaseolicola (strain 1448A / Race 6)), this protein is 4-hydroxy-tetrahydrodipicolinate reductase.